Here is a 293-residue protein sequence, read N- to C-terminus: Ribosomal RNA small subunit methyltransferase A (293 aa).

Asn-38, Val-40, Gly-65, Glu-86, Asp-116, and Asn-135 together coordinate S-adenosyl-L-methionine.

The protein belongs to the class I-like SAM-binding methyltransferase superfamily. rRNA adenine N(6)-methyltransferase family. RsmA subfamily.

The protein localises to the cytoplasm. It carries out the reaction adenosine(1518)/adenosine(1519) in 16S rRNA + 4 S-adenosyl-L-methionine = N(6)-dimethyladenosine(1518)/N(6)-dimethyladenosine(1519) in 16S rRNA + 4 S-adenosyl-L-homocysteine + 4 H(+). Functionally, specifically dimethylates two adjacent adenosines (A1518 and A1519) in the loop of a conserved hairpin near the 3'-end of 16S rRNA in the 30S particle. May play a critical role in biogenesis of 30S subunits. In Nocardia farcinica (strain IFM 10152), this protein is Ribosomal RNA small subunit methyltransferase A.